We begin with the raw amino-acid sequence, 585 residues long: T-cell surface protein tactile (585 aa).

The signal sequence occupies residues 1 to 21; sequence MEKKWKYCAVYYIIQIHFVKG. Over 22–519 the chain is Extracellular; the sequence is VWEKTVNTEE…IVVNKPKDGM (498 aa). The Ig-like V-type 1 domain occupies 38 to 125; the sequence is GSDVNLTCQT…YECMLVLYPE (88 aa). N-linked (GlcNAc...) asparagine glycosylation is found at asparagine 42, asparagine 97, asparagine 107, asparagine 148, asparagine 156, asparagine 166, asparagine 200, asparagine 215, asparagine 277, asparagine 278, asparagine 300, asparagine 350, and asparagine 368. Cysteine 45 and cysteine 118 are disulfide-bonded. An Ig-like V-type 2 domain is found at 156–238; sequence NQTLEIPCFQ…YRLHLSPVQI (83 aa). Cysteine 163 and cysteine 247 are disulfide-bonded. Positions 269-375 constitute an Ig-like C2-type domain; sequence PEIPVIVENN…VWNISSEKIT (107 aa). Residues cysteine 290 and cysteine 355 are joined by a disulfide bond. Composition is skewed to polar residues over residues 385-418, 426-452, and 460-475; these read TDPPLSVTESTLDTQPSPASSVSPARYPATSSVT, RPNTTPQPSNSSMTTRGFNYPWTSSGT, and RIPSETYSSSPSGAGS. The disordered stretch occupies residues 385 to 475; that stretch reads TDPPLSVTES…YSSSPSGAGS (91 aa). Asparagine 435 is a glycosylation site (N-linked (GlcNAc...) asparagine). The N-linked (GlcNAc...) asparagine glycan is linked to asparagine 497. The helical transmembrane segment at 520-540 threads the bilayer; sequence SWPVIVAALLFCCMILFGLGV. Topologically, residues 541–585 are cytoplasmic; sequence RKWCQYQKEIMERPPPFKPPPPPIKYTCIQEPNESDLPYHEMETL.

As to quaternary structure, homodimer; disulfide-linked. Interacts with PVR. In terms of tissue distribution, expressed on normal T-cell lines and clones, and some transformed T-cells, but no other cultured cell lines tested. It is expressed at very low levels on activated B-cells.

It localises to the membrane. Its function is as follows. May be involved in adhesive interactions of activated T and NK cells during the late phase of the immune response. Promotes NK cell-target adhesion by interacting with PVR present on target cells. May function at a time after T and NK cells have penetrated the endothelium using integrins and selectins, when they are actively engaging diseased cells and moving within areas of inflammation. This Homo sapiens (Human) protein is T-cell surface protein tactile (CD96).